A 445-amino-acid polypeptide reads, in one-letter code: Phosphoglucosamine mutase (445 aa).

Residue Ser102 is the Phosphoserine intermediate of the active site. Positions 102, 241, 243, and 245 each coordinate Mg(2+). Ser102 bears the Phosphoserine mark.

This sequence belongs to the phosphohexose mutase family. Requires Mg(2+) as cofactor. In terms of processing, activated by phosphorylation.

The catalysed reaction is alpha-D-glucosamine 1-phosphate = D-glucosamine 6-phosphate. Its function is as follows. Catalyzes the conversion of glucosamine-6-phosphate to glucosamine-1-phosphate. The protein is Phosphoglucosamine mutase of Rhodococcus jostii (strain RHA1).